A 149-amino-acid chain; its full sequence is Ribonuclease H (149 aa).

Residues 1 to 141 (MKTVTLFSDG…CDTMAREKAT (141 aa)) form the RNase H type-1 domain. The Mg(2+) site is built by aspartate 9, glutamate 47, aspartate 69, and aspartate 133.

Belongs to the RNase H family. Monomer. Mg(2+) is required as a cofactor.

It is found in the cytoplasm. The catalysed reaction is Endonucleolytic cleavage to 5'-phosphomonoester.. Endonuclease that specifically degrades the RNA of RNA-DNA hybrids. The polypeptide is Ribonuclease H (Campylobacter curvus (strain 525.92)).